Here is a 505-residue protein sequence, read N- to C-terminus: Lysine--tRNA ligase (505 aa).

Residues E415 and E422 each contribute to the Mg(2+) site.

It belongs to the class-II aminoacyl-tRNA synthetase family. As to quaternary structure, homodimer. It depends on Mg(2+) as a cofactor.

It localises to the cytoplasm. The enzyme catalyses tRNA(Lys) + L-lysine + ATP = L-lysyl-tRNA(Lys) + AMP + diphosphate. The sequence is that of Lysine--tRNA ligase from Serratia proteamaculans (strain 568).